We begin with the raw amino-acid sequence, 190 residues long: RNA pyrophosphohydrolase (190 aa).

The region spanning 6–149 is the Nudix hydrolase domain; sequence GYRPNVGIIL…KRDVYTQALN (144 aa). The Nudix box signature appears at 38 to 59; the sequence is GGIKYGESPVQAMYRELHEEVG. Residues 167-190 are disordered; the sequence is QRVHGPRSTDNPSSETDGHAHIAG.

The protein belongs to the Nudix hydrolase family. RppH subfamily. A divalent metal cation is required as a cofactor.

Its function is as follows. Accelerates the degradation of transcripts by removing pyrophosphate from the 5'-end of triphosphorylated RNA, leading to a more labile monophosphorylated state that can stimulate subsequent ribonuclease cleavage. This is RNA pyrophosphohydrolase from Bordetella parapertussis (strain 12822 / ATCC BAA-587 / NCTC 13253).